The sequence spans 649 residues: Endoglucanase D (649 aa).

The N-terminal stretch at 1–41 (MSRMTLKSSMKKRVLSLLIAVVFLSLTGVFPSGLIETKVSA) is a signal peptide. Residue D201 is the Nucleophile of the active site. Catalysis depends on residues H516 and D546. E555 serves as the catalytic Proton donor. The Dockerin domain maps to 579-649 (NEVLYGDVND…LIRVIEKLPI (71 aa)).

Belongs to the glycosyl hydrolase 9 (cellulase E) family. Ca(2+) serves as cofactor.

It carries out the reaction Endohydrolysis of (1-&gt;4)-beta-D-glucosidic linkages in cellulose, lichenin and cereal beta-D-glucans.. This enzyme catalyzes the endohydrolysis of 1,4-beta-glucosidic linkages in cellulose, lichenin and cereal beta-D-glucans. This chain is Endoglucanase D (celD), found in Acetivibrio thermocellus (strain ATCC 27405 / DSM 1237 / JCM 9322 / NBRC 103400 / NCIMB 10682 / NRRL B-4536 / VPI 7372) (Clostridium thermocellum).